A 247-amino-acid chain; its full sequence is MKVRILTLFPEMFNGPFGTSILKKAQEKELIDIQCFNIRDFALNKHKKVDDYPFGGGAGMVMTPQPIFDCHHHVTQMLNLNEPCKTIYLSPKGSTFTQEKAMELAKEEQLIFLCGHYEGIDQRIIDELVTDEISIGDYVLTGGELPAMVIVDAITRLIPGVLSTEASYEDESFHCGLLEYPHYTRPRAFNGLEVPSVLLSGNHKDIDMWRRKQSIELTFERRPDLLKGLQLKKNEAQWVAELSKKKE.

S-adenosyl-L-methionine contacts are provided by residues Gly-115 and 135-140 (IGDYVL).

It belongs to the RNA methyltransferase TrmD family. Homodimer.

The protein localises to the cytoplasm. The catalysed reaction is guanosine(37) in tRNA + S-adenosyl-L-methionine = N(1)-methylguanosine(37) in tRNA + S-adenosyl-L-homocysteine + H(+). Its function is as follows. Specifically methylates guanosine-37 in various tRNAs. This Alkaliphilus metalliredigens (strain QYMF) protein is tRNA (guanine-N(1)-)-methyltransferase.